The chain runs to 549 residues: Hydroxylamine reductase (549 aa).

[4Fe-4S] cluster-binding residues include Cys-5, Cys-8, Cys-17, and Cys-23. Residues His-242, Glu-266, Cys-310, Cys-402, Cys-430, Cys-455, Glu-490, and Lys-492 each contribute to the hybrid [4Fe-2O-2S] cluster site. Cys-402 is subject to Cysteine persulfide.

The protein belongs to the HCP family. The cofactor is [4Fe-4S] cluster. It depends on hybrid [4Fe-2O-2S] cluster as a cofactor.

The protein localises to the cytoplasm. The catalysed reaction is A + NH4(+) + H2O = hydroxylamine + AH2 + H(+). Functionally, catalyzes the reduction of hydroxylamine to form NH(3) and H(2)O. In Clostridium novyi (strain NT), this protein is Hydroxylamine reductase.